Reading from the N-terminus, the 265-residue chain is Glutamate racemase (265 aa).

Substrate is bound by residues 12 to 13 and 44 to 45; these read DS and YG. C75 acts as the Proton donor/acceptor in catalysis. 76–77 is a binding site for substrate; sequence NT. Catalysis depends on C186, which acts as the Proton donor/acceptor. Residue 187–188 coordinates substrate; the sequence is TH.

It belongs to the aspartate/glutamate racemases family.

It carries out the reaction L-glutamate = D-glutamate. The protein operates within cell wall biogenesis; peptidoglycan biosynthesis. Its function is as follows. Provides the (R)-glutamate required for cell wall biosynthesis. This chain is Glutamate racemase, found in Pseudomonas aeruginosa (strain UCBPP-PA14).